The chain runs to 185 residues: Elongation factor P (185 aa).

Belongs to the elongation factor P family.

It is found in the cytoplasm. Its pathway is protein biosynthesis; polypeptide chain elongation. Involved in peptide bond synthesis. Stimulates efficient translation and peptide-bond synthesis on native or reconstituted 70S ribosomes in vitro. Probably functions indirectly by altering the affinity of the ribosome for aminoacyl-tRNA, thus increasing their reactivity as acceptors for peptidyl transferase. This is Elongation factor P from Desulfovibrio desulfuricans (strain ATCC 27774 / DSM 6949 / MB).